The sequence spans 210 residues: MIRLFQLYEHQLKVRPKLTNSIMTGALFGIGDVSAQLLFPSGPDTLPPSAQTNDVKRGKYDIPRTVRAVVYGSMIFSFIGDRWYRFLTKVKFSNKPAKHWSNMVLRVCVDQLGFAPLGLPFYFGCMSLLEGHGLGAAREKIKLQWWDTLKTNWCVWPLFQMVNFSLVPLQHRLLAANVVAIFWNTFLSYTNSQIPVGGHKLTVQYPPTVQ.

The next 4 membrane-spanning stretches (helical) occupy residues 22–39 (IMTG…QLLF), 68–84 (AVVY…DRWY), 112–129 (LGFA…MSLL), and 173–189 (LLAA…FLSY).

Belongs to the peroxisomal membrane protein PXMP2/4 family.

The protein localises to the mitochondrion inner membrane. Its function is as follows. May be involved in cellular response to stress. Required to maintain mitochondrial DNA (mtDNA) integrity and stability. This is Protein SYM1 (SYM1) from Candida glabrata (strain ATCC 2001 / BCRC 20586 / JCM 3761 / NBRC 0622 / NRRL Y-65 / CBS 138) (Yeast).